The chain runs to 258 residues: Deoxyribose-phosphate aldolase (258 aa).

Asp-101 acts as the Proton donor/acceptor in catalysis. The active-site Schiff-base intermediate with acetaldehyde is the Lys-166. Residue Lys-200 is the Proton donor/acceptor of the active site.

The protein belongs to the DeoC/FbaB aldolase family. DeoC type 2 subfamily.

Its subcellular location is the cytoplasm. It catalyses the reaction 2-deoxy-D-ribose 5-phosphate = D-glyceraldehyde 3-phosphate + acetaldehyde. The protein operates within carbohydrate degradation; 2-deoxy-D-ribose 1-phosphate degradation; D-glyceraldehyde 3-phosphate and acetaldehyde from 2-deoxy-alpha-D-ribose 1-phosphate: step 2/2. Its function is as follows. Catalyzes a reversible aldol reaction between acetaldehyde and D-glyceraldehyde 3-phosphate to generate 2-deoxy-D-ribose 5-phosphate. The polypeptide is Deoxyribose-phosphate aldolase (Actinobacillus pleuropneumoniae serotype 5b (strain L20)).